A 245-amino-acid polypeptide reads, in one-letter code: Small ribosomal subunit protein uS2 (245 aa).

Belongs to the universal ribosomal protein uS2 family.

The polypeptide is Small ribosomal subunit protein uS2 (Pseudomonas putida (strain ATCC 47054 / DSM 6125 / CFBP 8728 / NCIMB 11950 / KT2440)).